A 133-amino-acid chain; its full sequence is UPF0292 protein TON_0187 (133 aa).

One can recognise a Toprim domain in the interval 20 to 100 (EGAIIVEGPR…RVDSETRKEL (81 aa)). Residues Glu26, Asp69, and Asp71 each coordinate Mg(2+).

Belongs to the UPF0292 family. Requires Mg(2+) as cofactor.

The protein is UPF0292 protein TON_0187 of Thermococcus onnurineus (strain NA1).